The primary structure comprises 502 residues: Serine/threonine-protein kinase SKS1 (502 aa).

Residues 10–338 (FRITAQIGSG…SEVSSLTSFT (329 aa)) form the Protein kinase domain. Residues 16-24 (IGSGAYGLV) and Lys-39 each bind ATP. Asp-186 (proton acceptor) is an active-site residue. Low complexity-rich tracts occupy residues 376 to 391 (QEQQ…QVQE) and 399 to 410 (EQIQNQEQAQQQ). Residues 376–439 (QEQQQQQQQQ…GSMEKYEYTN (64 aa)) form a disordered region. Residues 411-420 (QEEEDAEPES) are compositionally biased toward acidic residues.

This sequence belongs to the protein kinase superfamily. Ser/Thr protein kinase family.

The enzyme catalyses L-seryl-[protein] + ATP = O-phospho-L-seryl-[protein] + ADP + H(+). It carries out the reaction L-threonyl-[protein] + ATP = O-phospho-L-threonyl-[protein] + ADP + H(+). May have a role in glucose regulation. This is Serine/threonine-protein kinase SKS1 (SKS1) from Saccharomyces cerevisiae (strain ATCC 204508 / S288c) (Baker's yeast).